A 328-amino-acid polypeptide reads, in one-letter code: Biotin synthase (328 aa).

The Radical SAM core domain maps to 41–260; sequence TAIETASLLS…VALARILMPA (220 aa). 3 residues coordinate [4Fe-4S] cluster: C56, C60, and C63. [2Fe-2S] cluster-binding residues include C100, C131, C191, and R264.

The protein belongs to the radical SAM superfamily. Biotin synthase family. In terms of assembly, homodimer. It depends on [4Fe-4S] cluster as a cofactor. The cofactor is [2Fe-2S] cluster.

The catalysed reaction is (4R,5S)-dethiobiotin + (sulfur carrier)-SH + 2 reduced [2Fe-2S]-[ferredoxin] + 2 S-adenosyl-L-methionine = (sulfur carrier)-H + biotin + 2 5'-deoxyadenosine + 2 L-methionine + 2 oxidized [2Fe-2S]-[ferredoxin]. It participates in cofactor biosynthesis; biotin biosynthesis; biotin from 7,8-diaminononanoate: step 2/2. Catalyzes the conversion of dethiobiotin (DTB) to biotin by the insertion of a sulfur atom into dethiobiotin via a radical-based mechanism. This chain is Biotin synthase, found in Cereibacter sphaeroides (strain ATCC 17023 / DSM 158 / JCM 6121 / CCUG 31486 / LMG 2827 / NBRC 12203 / NCIMB 8253 / ATH 2.4.1.) (Rhodobacter sphaeroides).